The sequence spans 179 residues: NADH:FAD oxidoreductase (179 aa).

48 to 51 (TCSA) is a binding site for FAD. 54-57 (SVCD) serves as a coordination point for NAD(+). FAD contacts are provided by residues 65–71 (CINRKSY), A99, 104–109 (VPMEER), and S144. Residues H145 and 166-169 (YHRR) each bind NAD(+). Y166 is an FAD binding site.

Belongs to the non-flavoprotein flavin reductase family. As to quaternary structure, homodimer. The chlorophenol-4-monooxygenase is composed of an oxygenase component TftD and a reductase component TftC.

It carries out the reaction FADH2 + NAD(+) = FAD + NADH + 2 H(+). It participates in xenobiotic degradation. Its function is as follows. Reductase component of a two-component system that degrades 2,4,5-trichlorophenol. TftC provides the FADH(2) required by TftD. TftD oxidizes 2,4,5-trichlorophenol (2,4,5-TCP) to 2,5-dichloro-p-benzoquinone, which is chemically reduced to 2,5-dichloro-p-hydroquinone (2,5-DiCHQ). Then, TftD oxidizes the latter to 5-chloro-2-hydroxy-p-benzoquinone. The sequence is that of NADH:FAD oxidoreductase (tftC) from Burkholderia cepacia (Pseudomonas cepacia).